The chain runs to 981 residues: DNA ligase 4 (981 aa).

ATP is bound by residues Glu-320, Lys-322, Arg-327, Glu-380, Phe-424, Glu-484, Lys-489, Lys-506, and Lys-508. The N6-AMP-lysine intermediate role is filled by Lys-322. Glu-380 provides a ligand contact to Mg(2+). A Mg(2+)-binding site is contributed by Glu-484. A disordered region spans residues 544–563; the sequence is SEKNNPSSYESGSDSDSDSE. 2 BRCT domains span residues 721–819 and 875–980; these read SKAD…PKYV and ERLL…EYAA.

This sequence belongs to the ATP-dependent DNA ligase family. Requires Mg(2+) as cofactor.

The protein localises to the nucleus. It carries out the reaction ATP + (deoxyribonucleotide)n-3'-hydroxyl + 5'-phospho-(deoxyribonucleotide)m = (deoxyribonucleotide)n+m + AMP + diphosphate.. In terms of biological role, DNA ligase involved in DNA non-homologous end joining (NHEJ); required for double-strand break (DSB) repair. This is DNA ligase 4 (LIG4) from Eremothecium gossypii (strain ATCC 10895 / CBS 109.51 / FGSC 9923 / NRRL Y-1056) (Yeast).